Here is a 371-residue protein sequence, read N- to C-terminus: Cysteine proteinase 1 (371 aa).

The N-terminal stretch at 1–18 (MAHRVLLLLSLASAAAVA) is a signal peptide. Residues 19–136 (AAVDAEDPLI…HEAPVLPTDG (118 aa)) constitute a propeptide, activation peptide. 2 disulfide bridges follow: Cys-158–Cys-208 and Cys-192–Cys-241. The active site involves Cys-161. N-linked (GlcNAc...) asparagine glycosylation occurs at Asn-254. A disulfide bond links Cys-297 and Cys-354. Catalysis depends on residues His-303 and Asn-330.

It belongs to the peptidase C1 family. In terms of tissue distribution, expressed during the late stages of seed ripening, in mature seeds and during germination.

Involved in the degradation of the storage protein zein. May play a role in proteolysis during emergencies. The protein is Cysteine proteinase 1 (CCP1) of Zea mays (Maize).